Here is a 518-residue protein sequence, read N- to C-terminus: Serine--tRNA ligase, mitochondrial (518 aa).

The N-terminal 34 residues, 1-34 (MAASIVRRLGPLVAGRGLRLRGGCVCNQSFKRSF), are a transit peptide targeting the mitochondrion. N6-acetyllysine is present on Lys110. Lys195 carries the post-translational modification N6-succinyllysine. 299 to 301 (TAE) contributes to the L-serine binding site. 330–332 (RAE) serves as a coordination point for ATP. The residue at position 337 (Lys337) is an N6-succinyllysine. An ATP-binding site is contributed by Val345. An L-serine-binding site is contributed by Glu352. 418–421 (EVTS) serves as a coordination point for ATP. Thr453 is an L-serine binding site. Positions 497 to 518 (PLQYIGPNQPQKPRLPGQPASS) are disordered.

Belongs to the class-II aminoacyl-tRNA synthetase family. Type-1 seryl-tRNA synthetase subfamily. In terms of assembly, homodimer. The tRNA molecule probably binds across the dimer. Two N-termini starting at positions 35 and 37 have been identified by direct sequencing.

It is found in the mitochondrion matrix. It catalyses the reaction tRNA(Ser) + L-serine + ATP = L-seryl-tRNA(Ser) + AMP + diphosphate + H(+). The enzyme catalyses tRNA(Sec) + L-serine + ATP = L-seryl-tRNA(Sec) + AMP + diphosphate + H(+). The protein operates within aminoacyl-tRNA biosynthesis; selenocysteinyl-tRNA(Sec) biosynthesis; L-seryl-tRNA(Sec) from L-serine and tRNA(Sec): step 1/1. Catalyzes the attachment of serine to tRNA(Ser). Is also probably able to aminoacylate tRNA(Sec) with serine, to form the misacylated tRNA L-seryl-tRNA(Sec), which will be further converted into selenocysteinyl-tRNA(Sec). The polypeptide is Serine--tRNA ligase, mitochondrial (SARS2) (Bos taurus (Bovine)).